The chain runs to 490 residues: GTPase Der (490 aa).

2 EngA-type G domains span residues 3–166 (PVIA…PKDE) and 196–369 (IKIA…KSAV). Residues 9–16 (GRPNVGKS), 56–60 (DTGGI), 118–121 (NKID), 202–209 (GRPNVGKS), 249–253 (DTAGV), and 314–317 (NKWD) each bind GTP. The KH-like domain occupies 370 to 454 (TRWPTSRLTQ…PIRIEFKGGE (85 aa)). Residues 452 to 490 (GGENPYEGNKNTLTDRQVNKKRRMMSHHKKADKKRRDKR) are disordered. The span at 470–490 (NKKRRMMSHHKKADKKRRDKR) shows a compositional bias: basic residues.

This sequence belongs to the TRAFAC class TrmE-Era-EngA-EngB-Septin-like GTPase superfamily. EngA (Der) GTPase family. As to quaternary structure, associates with the 50S ribosomal subunit.

Functionally, GTPase that plays an essential role in the late steps of ribosome biogenesis. This is GTPase Der from Pseudomonas savastanoi pv. phaseolicola (strain 1448A / Race 6) (Pseudomonas syringae pv. phaseolicola (strain 1448A / Race 6)).